The primary structure comprises 354 residues: DNA repair protein rhp57 (354 aa).

100–107 contributes to the ATP binding site; that stretch reads GESGSGKS.

It belongs to the RecA family.

Its subcellular location is the nucleus. In terms of biological role, involved in recombination DNA repair and in the repair of gamma-ray-induced damage. In Schizosaccharomyces pombe (strain 972 / ATCC 24843) (Fission yeast), this protein is DNA repair protein rhp57 (rhp57).